Reading from the N-terminus, the 111-residue chain is RNA polymerase-binding protein RbpA (111 aa).

The protein belongs to the RNA polymerase-binding protein RbpA family. In terms of assembly, forms a complex with the RNAP catalytic core and with free principal sigma factors.

Binds to RNA polymerase (RNAP), stimulating transcription from principal, but not alternative sigma factor promoters. The polypeptide is RNA polymerase-binding protein RbpA (Mycobacterium tuberculosis (strain CDC 1551 / Oshkosh)).